Reading from the N-terminus, the 205-residue chain is MIGRLRGTLAEKQPPHLIIDVNGVGYELEVPMTTLYRLPKVGEPVTVHTHLVVREDAHLLYGFAEKRERELFRELIRLNGVGPKLALALMSGLEVDELVRCVQAQDASVLVRVPGVGKKTAERLLVELKDRFKAWETSPAMFTLVSDGPLPVASESSAEADAVSALVSLGYKPQEASKAIAAIKDKAGLSSEELIRRSLKGMIAK.

Positions 1–64 are domain I; sequence MIGRLRGTLA…EDAHLLYGFA (64 aa). Residues 65–143 are domain II; it reads EKRERELFRE…AWETSPAMFT (79 aa). Residues 144-154 are flexible linker; sequence LVSDGPLPVAS. The interval 154–205 is domain III; that stretch reads SESSAEADAVSALVSLGYKPQEASKAIAAIKDKAGLSSEELIRRSLKGMIAK.

Belongs to the RuvA family. As to quaternary structure, homotetramer. Forms an RuvA(8)-RuvB(12)-Holliday junction (HJ) complex. HJ DNA is sandwiched between 2 RuvA tetramers; dsDNA enters through RuvA and exits via RuvB. An RuvB hexamer assembles on each DNA strand where it exits the tetramer. Each RuvB hexamer is contacted by two RuvA subunits (via domain III) on 2 adjacent RuvB subunits; this complex drives branch migration. In the full resolvosome a probable DNA-RuvA(4)-RuvB(12)-RuvC(2) complex forms which resolves the HJ.

The protein resides in the cytoplasm. Functionally, the RuvA-RuvB-RuvC complex processes Holliday junction (HJ) DNA during genetic recombination and DNA repair, while the RuvA-RuvB complex plays an important role in the rescue of blocked DNA replication forks via replication fork reversal (RFR). RuvA specifically binds to HJ cruciform DNA, conferring on it an open structure. The RuvB hexamer acts as an ATP-dependent pump, pulling dsDNA into and through the RuvAB complex. HJ branch migration allows RuvC to scan DNA until it finds its consensus sequence, where it cleaves and resolves the cruciform DNA. In Pseudomonas entomophila (strain L48), this protein is Holliday junction branch migration complex subunit RuvA.